The sequence spans 130 residues: Glycine cleavage system H protein (130 aa).

The region spanning 24-106 (IYSVGITEHA…YADGWLFRIR (83 aa)) is the Lipoyl-binding domain. An N6-lipoyllysine modification is found at K65.

It belongs to the GcvH family. In terms of assembly, the glycine cleavage system is composed of four proteins: P, T, L and H. Requires (R)-lipoate as cofactor.

In terms of biological role, the glycine cleavage system catalyzes the degradation of glycine. The H protein shuttles the methylamine group of glycine from the P protein to the T protein. This Pectobacterium carotovorum subsp. carotovorum (strain PC1) protein is Glycine cleavage system H protein.